Here is a 348-residue protein sequence, read N- to C-terminus: Oxidase ucsJ (348 aa).

The protein belongs to the avfA family.

The protein operates within mycotoxin biosynthesis. Oxidase; part of the gene cluster that mediates the biosynthesis of UCS1025A, a member of the pyrrolizidinone family that acts as a strong telomerase inhibitor and displays potent antibacterial and antitumor properties. These compounds share a hemiaminal-containing pyrrolizidinone core fused with a gamma-lactone, giving a furopyrrolizidine that is connected to a decalin fragment. The polyketide synthase module (PKS) of the PKS-NRPS ucsA is responsible for the synthesis of the polyketide backbone via the condensation of an acetyl-CoA starter unit with 6 malonyl-CoA units. The downstream nonribosomal peptide synthetase (NRPS) module then amidates the carboxyl end of the polyketide with a 2S,3S-methylproline derived from L-isoleucine by the 2-oxoglutarate-dependent dioxygenase ucsF which converts L-isoleucine to (4S,5S)-4-methylpyrroline-5-carboxylate that is further converted to 2S,3S-methylproline by the pyrroline-5-carboxylate reductase ucsG. Reductive release of the completed aminoacyl polyketide from the assembly line can form the 3-pyrrolin-2-one structure via an intramolecular Knoevenagel reaction. Because ucsA lacks a designated enoylreductase (ER) domain, the required activity is provided the enoyl reductase ucsL. This keto acyclic precursor is the substrate of the Diels-Alderase ucsH, that catalyzes the Diels-Alder cycloaddition. Oxidation of the 3S-methyl group to a carboxylate by the cytochrome P450 monooxygenase ucsK allows an oxa-Michael cyclization that might involve the reductase/dehydrogenase ucsI and which furnishes the furopyrrolizidine. The oxidase ucsJ likely plays a critical role in stereoselective reduction of the C5-C6 double bond to afford the required R-configured carboxylate group. Further enolization and oxidation at C5 by an unidentified enzyme affords the last intermediate that can undergo oxa-Michael cyclization to yield UCS1025A. The sequence is that of Oxidase ucsJ from Acremonium sp.